The primary structure comprises 460 residues: NADH-ubiquinone oxidoreductase chain 4 (460 aa).

The next 13 helical transmembrane spans lie at Ala20 to Leu42, Pro61 to Ser81, Arg94 to Ala113, Ile117 to Asn139, Thr148 to Met168, Leu195 to Leu215, Pro225 to Met245, Leu258 to Leu278, Ser285 to Ile304, Trp308 to Leu330, Met351 to Pro371, Leu394 to Met414, and Leu436 to Trp456.

Belongs to the complex I subunit 4 family.

Its subcellular location is the mitochondrion membrane. The catalysed reaction is a ubiquinone + NADH + 5 H(+)(in) = a ubiquinol + NAD(+) + 4 H(+)(out). Core subunit of the mitochondrial membrane respiratory chain NADH dehydrogenase (Complex I) that is believed to belong to the minimal assembly required for catalysis. Complex I functions in the transfer of electrons from NADH to the respiratory chain. The immediate electron acceptor for the enzyme is believed to be ubiquinone. This chain is NADH-ubiquinone oxidoreductase chain 4 (MT-ND4), found in Oncorhynchus mykiss (Rainbow trout).